Here is a 93-residue protein sequence, read N- to C-terminus: Neutrophil cationic peptide 1 type A (93 aa).

An N-terminal signal peptide occupies residues 1–19 (MRTVPLFAACLLLTLMAQA). A propeptide spanning residues 20–62 (EPLPRAADHSDTKMKGDREDHVAVISFWEEESTSLEDAGAGAG) is cleaved from the precursor. 3 disulfide bridges follow: Cys-65–Cys-93, Cys-67–Cys-82, and Cys-72–Cys-92.

It belongs to the alpha-defensin family.

Its subcellular location is the secreted. In terms of biological role, has antibiotic, anti-fungi and antiviral activity. This Cavia porcellus (Guinea pig) protein is Neutrophil cationic peptide 1 type A.